Reading from the N-terminus, the 356-residue chain is Ribosomal RNA large subunit methyltransferase M (356 aa).

S-adenosyl-L-methionine is bound by residues Ser187, 220–223 (CPGG), Asp239, Asp259, and Asp276. Catalysis depends on Lys305, which acts as the Proton acceptor.

It belongs to the class I-like SAM-binding methyltransferase superfamily. RNA methyltransferase RlmE family. RlmM subfamily. As to quaternary structure, monomer.

The protein resides in the cytoplasm. The enzyme catalyses cytidine(2498) in 23S rRNA + S-adenosyl-L-methionine = 2'-O-methylcytidine(2498) in 23S rRNA + S-adenosyl-L-homocysteine + H(+). Functionally, catalyzes the 2'-O-methylation at nucleotide C2498 in 23S rRNA. This is Ribosomal RNA large subunit methyltransferase M from Pseudoalteromonas atlantica (strain T6c / ATCC BAA-1087).